A 764-amino-acid polypeptide reads, in one-letter code: Complement factor B (764 aa).

The signal sequence occupies residues 1–25; the sequence is MGSNLSPQLCLMPFILGLLSGGVTT. Sushi domains are found at residues 35–100, 101–160, and 163–220; these read GSCS…ECRA, IHCP…ICDN, and GYCS…SCQD. Intrachain disulfides connect Cys-37/Cys-76, Cys-62/Cys-98, Cys-103/Cys-145, Cys-131/Cys-158, Cys-165/Cys-205, and Cys-191/Cys-218. 2 N-linked (GlcNAc...) asparagine glycosylation sites follow: Asn-122 and Asn-142. Positions 270–469 constitute a VWFA domain; it reads NIYLVLDGSD…NLEDVFFQMI (200 aa). Ser-278 and Ser-280 together coordinate Mg(2+). Residue Asn-285 is glycosylated (N-linked (GlcNAc...) asparagine). Residue Thr-353 coordinates Mg(2+). A glycan (N-linked (GlcNAc...) asparagine) is linked at Asn-378. Residues 477 to 757 form the Peptidase S1 domain; sequence LCGMVWEHRK…VLPWLKQKLQ (281 aa). 5 disulfide bridges follow: Cys-478–Cys-596, Cys-511–Cys-527, Cys-599–Cys-615, Cys-656–Cys-682, and Cys-695–Cys-725. Active-site charge relay system residues include His-526 and Asp-576. Ser-699 acts as the Charge relay system in catalysis.

The protein belongs to the peptidase S1 family. In terms of assembly, monomer. Interacts with complement C3b; this interaction is dependent on the presence of Mg(2+). As to quaternary structure, catalytic component of the C3 convertase of the alternative complement pathway, also named C3bBb, composed of complement factor B Bb and complement C3b. Catalytic component of the C5 convertase of the alternative complement pathway, also named C3bBb3b, composed of complement factor B Bb and additional molecules of complement C3b. Interacts to CFP; this interaction contributes to the stabilization of the active C3-convertase enzyme complex. Requires Mg(2+) as cofactor. It depends on Mn(2+) as a cofactor. Cleaved by CFD following activation of the alternative complement system, generating Ba and Bb chains. Cleavage and activation takes place when CFB is already associated with complement C3b.

The protein resides in the secreted. The protein localises to the cell surface. It catalyses the reaction Cleavage of Arg-|-Ser bond in complement component C3 alpha-chain to yield C3a and C3b, and Arg-|-Xaa bond in complement component C5 alpha-chain to yield C5a and C5b.. Functionally, precursor of the catalytic component of the C3 and C5 convertase complexes of the alternative pathway of the complement system, a cascade of proteins that leads to phagocytosis and breakdown of pathogens and signaling that strengthens the adaptive immune system. The alternative complement pathway acts as an amplification loop that enhances other complement pathways (classical, lectin and GZMK) by promoting formation of additional C3 and C5 convertases. CFB is cleaved and activated by CFD to generate Ba and Bb chains; Bb chain constituting the catalytic component of the C3 and C5 convertases. In terms of biological role, serine protease component of the complement C3 and C5 convertase complexes of the alternative complement pathway. Following cleavage and activation by factor D (CFD), forms the C3 convertase together with complement C3b. As part of the C3 convertase, cleaves and activates C3 into C3a anaphylatoxin and C3b opsonin, the next components of the complement pathways. When an additional complement C3b molecule binds to the C3 convertase, forms the C5 convertase, which cleaves and activates C5 into C5a anaphylatoxin and C5b component of the membrane attack complex. Its function is as follows. Involved in proliferation and differentiation of preactivated B-lymphocytes, rapid spreading of peripheral blood monocytes, stimulation of lymphocyte blastogenesis and lysis of erythrocytes. The polypeptide is Complement factor B (CFB) (Pongo pygmaeus (Bornean orangutan)).